The sequence spans 184 residues: Peptide deformylase (184 aa).

Fe cation-binding residues include C111 and H154. E155 is a catalytic residue. H158 lines the Fe cation pocket.

The protein belongs to the polypeptide deformylase family. Fe(2+) serves as cofactor.

The enzyme catalyses N-terminal N-formyl-L-methionyl-[peptide] + H2O = N-terminal L-methionyl-[peptide] + formate. In terms of biological role, removes the formyl group from the N-terminal Met of newly synthesized proteins. Requires at least a dipeptide for an efficient rate of reaction. N-terminal L-methionine is a prerequisite for activity but the enzyme has broad specificity at other positions. The polypeptide is Peptide deformylase (Lactobacillus delbrueckii subsp. bulgaricus (strain ATCC 11842 / DSM 20081 / BCRC 10696 / JCM 1002 / NBRC 13953 / NCIMB 11778 / NCTC 12712 / WDCM 00102 / Lb 14)).